We begin with the raw amino-acid sequence, 144 residues long: MKSYIAKAEQIERKWYVVDAAGKPLGRVASQVASVLRGKHKPIFTPHVDTGDFVIVINSEKVLLTGKKLDQKMLRHHSLYPGGLKETPYREALNKKPEFVFQEAVRRMLPKGVLGRKMLKKLKVYRGTEHNNEAQKPEVLELKY.

It belongs to the universal ribosomal protein uL13 family. Part of the 50S ribosomal subunit.

Its function is as follows. This protein is one of the early assembly proteins of the 50S ribosomal subunit, although it is not seen to bind rRNA by itself. It is important during the early stages of 50S assembly. The polypeptide is Large ribosomal subunit protein uL13 (Clostridium kluyveri (strain NBRC 12016)).